The following is a 361-amino-acid chain: MNSSIFNKLKSLRNRYEEIEIMLSQKDTISNQEKFKNLSKEYLQISEIVKNFIKWEKLETDIKNINLLFNDVEMHDIAQEELFIVKKQKKKLEEKIKILLLPVDPNDQHSCFIEIRAATGGDESSIFAGELFRMYTRYAENYMWKTEIMSSSENERGGFKEIIAKVTGKGACGRLKFESGGHRVQRVPETESQGRIHTSTCTVAIMPVRPKTKKEEIKVSDLKIDTFRSSGAGGQHVNTTDSAIRITHIPSGNVVECQDERSQHKNKAKALSILSARVYADKLAKSQKENSSMRRILLGTGERSDRNRTYNFAQNRITDHRINLTIYKLNEVLQGKLDLLIDPIMQEYQADMLSSLSEFKL.

Glutamine 235 carries the post-translational modification N5-methylglutamine.

Belongs to the prokaryotic/mitochondrial release factor family. Post-translationally, methylated by PrmC. Methylation increases the termination efficiency of RF1.

Its subcellular location is the cytoplasm. Functionally, peptide chain release factor 1 directs the termination of translation in response to the peptide chain termination codons UAG and UAA. The polypeptide is Peptide chain release factor 1 (Buchnera aphidicola subsp. Schizaphis graminum (strain Sg)).